The sequence spans 461 residues: Cysteine--tRNA ligase (461 aa).

Cys28 is a Zn(2+) binding site. Positions 30-40 (VTIYDLCHIGH) match the 'HIGH' region motif. Zn(2+) is bound by residues Cys209, His234, and Glu238. A 'KMSKS' region motif is present at residues 266–270 (KMSKS). Lys269 is a binding site for ATP.

It belongs to the class-I aminoacyl-tRNA synthetase family. In terms of assembly, monomer. The cofactor is Zn(2+).

It is found in the cytoplasm. It catalyses the reaction tRNA(Cys) + L-cysteine + ATP = L-cysteinyl-tRNA(Cys) + AMP + diphosphate. The polypeptide is Cysteine--tRNA ligase (Hamiltonella defensa subsp. Acyrthosiphon pisum (strain 5AT)).